The primary structure comprises 517 residues: Cell division cycle protein 73 (517 aa).

The span at 124–135 (SEPEAKKPRLDG) shows a compositional bias: basic and acidic residues. Disordered stretches follow at residues 124–159 (SEPE…SAAK) and 306–326 (GHHA…LAKP). The span at 315–324 (DAPPGRPPLA) shows a compositional bias: pro residues.

The protein belongs to the CDC73 family. In terms of assembly, component of the PAF1 complex which consists of at least cdc-73, ctr-9, leo-1, pafo-1 and rtfo-1.

It is found in the nucleus. Functionally, component of the PAF1 complex which is a multifunctional complex involved in transcription initiation via genetic interactions with TATA-binding proteins, elongation and transcription-coupled histone modification. The sequence is that of Cell division cycle protein 73 from Caenorhabditis elegans.